The chain runs to 94 residues: Small ribosomal subunit protein bS18 (94 aa).

The span at 1–11 (MANERPTSQQR) shows a compositional bias: polar residues. Positions 1–24 (MANERPTSQQRPAGGPRKRRPFQR) are disordered.

It belongs to the bacterial ribosomal protein bS18 family. As to quaternary structure, part of the 30S ribosomal subunit. Forms a tight heterodimer with protein bS6.

Functionally, binds as a heterodimer with protein bS6 to the central domain of the 16S rRNA, where it helps stabilize the platform of the 30S subunit. The chain is Small ribosomal subunit protein bS18 from Pelobacter propionicus (strain DSM 2379 / NBRC 103807 / OttBd1).